The following is a 274-amino-acid chain: Shikimate dehydrogenase (NADP(+)) (274 aa).

Residues 20–22 (SKS) and threonine 68 contribute to the shikimate site. Lysine 72 (proton acceptor) is an active-site residue. Residue aspartate 84 participates in NADP(+) binding. Asparagine 93 and aspartate 109 together coordinate shikimate. Residues 131–135 (GAGGA) and leucine 217 contribute to the NADP(+) site. Residue tyrosine 219 coordinates shikimate. Residue glycine 240 coordinates NADP(+).

It belongs to the shikimate dehydrogenase family. Homodimer.

It catalyses the reaction shikimate + NADP(+) = 3-dehydroshikimate + NADPH + H(+). It participates in metabolic intermediate biosynthesis; chorismate biosynthesis; chorismate from D-erythrose 4-phosphate and phosphoenolpyruvate: step 4/7. Involved in the biosynthesis of the chorismate, which leads to the biosynthesis of aromatic amino acids. Catalyzes the reversible NADPH linked reduction of 3-dehydroshikimate (DHSA) to yield shikimate (SA). This chain is Shikimate dehydrogenase (NADP(+)), found in Sphingopyxis alaskensis (strain DSM 13593 / LMG 18877 / RB2256) (Sphingomonas alaskensis).